A 217-amino-acid polypeptide reads, in one-letter code: MKALIYARVSTNKEQQETSLKRQEEELTAIAAENGMEVVKVISEKASGYEMDRDGVFELLDEIKNADIDVILVQDETRLGRGNAKIALLHCIYREGVKVYTTAHRGELELSEADSMVLEIVSIVEEYQRKIHNMKIRRGMKRAVKNGFKPQKNLKNQHGNSGKEKIEVPISEIVRLRANKLTFAEIAATLRGFGYDVSKATVHRRFQEYIENEETAE.

Residues 2-147 (KALIYARVST…RGMKRAVKNG (146 aa)) form the Resolvase/invertase-type recombinase catalytic domain. Ser-10 (O-(5'-phospho-DNA)-serine intermediate) is an active-site residue.

The protein belongs to the site-specific recombinase resolvase family.

This chain is Resolvase homolog YneB (yneB), found in Bacillus subtilis (strain 168).